The primary structure comprises 45 residues: Mu-conotoxin-like Cal 12.1.2g (45 aa).

4 disulfide bridges follow: cysteine 3-cysteine 16, cysteine 11-cysteine 28, cysteine 18-cysteine 33, and cysteine 27-cysteine 39. At proline 23 the chain carries 4-hydroxyproline. Tryptophan 37 and tryptophan 38 each carry 6'-bromotryptophan. At proline 40 the chain carries 4-hydroxyproline.

In terms of tissue distribution, expressed by the venom duct.

Its subcellular location is the secreted. In terms of biological role, mu-conotoxins block voltage-gated sodium channels. This toxin reversibly blocks voltage-gated sodium channel in cephalopods, with no alteration in the voltage dependence of sodium conductance or on the kinetics of inactivation. The protein is Mu-conotoxin-like Cal 12.1.2g of Californiconus californicus (California cone).